Reading from the N-terminus, the 371-residue chain is Cytochrome b (371 aa).

The next 4 membrane-spanning stretches (helical) occupy residues 25–45 (FGSM…FLAV), 69–90 (WMMQ…YIHI), 105–125 (WMSG…GYVL), and 170–190 (FFAL…LHII). Positions 75 and 89 each coordinate heme b. Residues His-174 and His-188 each coordinate heme b. His-193 provides a ligand contact to a ubiquinone. Helical transmembrane passes span 218 to 238 (HKDL…SSFF), 280 to 300 (LGGA…PFTH), 312 to 332 (LSQL…WAAT), and 339 to 358 (FIVI…LSTP).

The protein belongs to the cytochrome b family. The cytochrome bc1 complex contains 3 respiratory subunits (MT-CYB, CYC1 and UQCRFS1), 2 core proteins (UQCRC1 and UQCRC2) and probably 6 low-molecular weight proteins. Heme b serves as cofactor.

It localises to the mitochondrion inner membrane. In terms of biological role, component of the ubiquinol-cytochrome c reductase complex (complex III or cytochrome b-c1 complex) that is part of the mitochondrial respiratory chain. The b-c1 complex mediates electron transfer from ubiquinol to cytochrome c. Contributes to the generation of a proton gradient across the mitochondrial membrane that is then used for ATP synthesis. This is Cytochrome b (MT-CYB) from Aspidites melanocephalus (Black-headed python).